A 96-amino-acid polypeptide reads, in one-letter code: UPF0235 protein YggU (96 aa).

It belongs to the UPF0235 family.

In Salmonella typhi, this protein is UPF0235 protein YggU.